The chain runs to 121 residues: Small ribosomal subunit protein uS13 (121 aa).

The tract at residues proline 96 to lysine 121 is disordered. Basic residues predominate over residues alanine 106–lysine 121.

This sequence belongs to the universal ribosomal protein uS13 family. As to quaternary structure, part of the 30S ribosomal subunit. Forms a loose heterodimer with protein S19. Forms two bridges to the 50S subunit in the 70S ribosome.

In terms of biological role, located at the top of the head of the 30S subunit, it contacts several helices of the 16S rRNA. In the 70S ribosome it contacts the 23S rRNA (bridge B1a) and protein L5 of the 50S subunit (bridge B1b), connecting the 2 subunits; these bridges are implicated in subunit movement. Contacts the tRNAs in the A and P-sites. In Streptococcus suis (strain 05ZYH33), this protein is Small ribosomal subunit protein uS13.